We begin with the raw amino-acid sequence, 331 residues long: Calcium-binding and coiled-coil domain-containing protein 2 (331 aa).

Positions 128–131 match the CLIR motif; it reads IMVV. Positions 132 to 309 form a coiled coil; it reads INKEKVEEME…EKASWEKEKA (178 aa). Positions 189–310 are disordered; that stretch reads KASWEKEKAS…KASWEKEKAP (122 aa). The short motif at 190 to 193 is the LIR-like element; it reads ASWE. The interaction with LGALS8 stretch occupies residues 292 to 302; the sequence is KEKASWEEEKA.

It belongs to the CALCOCO family. Dimer. Part of a complex consisting of CALCOCO2, TAX1BP1 and MYO6. Interacts with MYO6. Interacts with GEMIN4. Interacts with ATG8 family members MAP1LC3A, MAP1LC3B, GABARAP, GABARAPL1 and GABARAPL2. Interacts with ATG8 family member MAP1LC3C. Interacts with LGALS8. Interacts with TOM1; the interaction is indirect and is mediated by MYO6, which acts as a bridge between TOM1 and CALCOCO2. Interacts with AZI2.

Its subcellular location is the cytoplasm. It localises to the perinuclear region. The protein resides in the cytoskeleton. The protein localises to the cytoplasmic vesicle. It is found in the autophagosome membrane. Functionally, xenophagy-specific receptor required for autophagy-mediated intracellular bacteria degradation. Acts as an effector protein of galectin-sensed membrane damage that restricts the proliferation of infecting pathogens upon entry into the cytosol by targeting LGALS8-associated bacteria for autophagy. Initially orchestrates bacteria targeting to autophagosomes and subsequently ensures pathogen degradation by regulating pathogen-containing autophagosome maturation. Bacteria targeting to autophagosomes relies on its interaction with MAP1LC3A, MAP1LC3B and/or GABARAPL2, whereas regulation of pathogen-containing autophagosome maturation requires the interaction with MAP3LC3C. May play a role in ruffle formation and actin cytoskeleton organization and seems to negatively regulate constitutive secretion. In Mus musculus (Mouse), this protein is Calcium-binding and coiled-coil domain-containing protein 2.